A 140-amino-acid polypeptide reads, in one-letter code: ATP synthase epsilon chain (140 aa).

The protein belongs to the ATPase epsilon chain family. As to quaternary structure, F-type ATPases have 2 components, CF(1) - the catalytic core - and CF(0) - the membrane proton channel. CF(1) has five subunits: alpha(3), beta(3), gamma(1), delta(1), epsilon(1). CF(0) has three main subunits: a, b and c.

The protein resides in the cell membrane. Produces ATP from ADP in the presence of a proton gradient across the membrane. In Enterococcus hirae (strain ATCC 9790 / DSM 20160 / JCM 8729 / LMG 6399 / NBRC 3181 / NCIMB 6459 / NCDO 1258 / NCTC 12367 / WDCM 00089 / R), this protein is ATP synthase epsilon chain (atpC).